The following is a 240-amino-acid chain: Ribonuclease HII (240 aa).

In terms of domain architecture, RNase H type-2 spans 29–220; sequence EPIAGVDEAG…VRRAAGLEPL (192 aa). The a divalent metal cation site is built by aspartate 35, glutamate 36, and aspartate 129.

The protein belongs to the RNase HII family. The cofactor is Mn(2+). Mg(2+) is required as a cofactor.

The protein localises to the cytoplasm. The catalysed reaction is Endonucleolytic cleavage to 5'-phosphomonoester.. Its function is as follows. Endonuclease that specifically degrades the RNA of RNA-DNA hybrids. This chain is Ribonuclease HII, found in Nocardioides sp. (strain ATCC BAA-499 / JS614).